A 20-amino-acid chain; its full sequence is Citrate synthase (20 aa).

Belongs to the citrate synthase family. As to quaternary structure, homodimer.

The catalysed reaction is oxaloacetate + acetyl-CoA + H2O = citrate + CoA + H(+). Its pathway is carbohydrate metabolism; tricarboxylic acid cycle; isocitrate from oxaloacetate: step 1/2. The protein is Citrate synthase of Populus euphratica (Euphrates poplar).